A 1045-amino-acid chain; its full sequence is Isoleucine--tRNA ligase (1045 aa).

The 'HIGH' region motif lies at 49–59; the sequence is PYCSGRIHLGT. The short motif at 591–595 is the 'KMSKS' region element; that stretch reads KMSKS. Lys-594 is an ATP binding site.

The protein belongs to the class-I aminoacyl-tRNA synthetase family. IleS type 2 subfamily. Monomer. Zn(2+) serves as cofactor.

It localises to the cytoplasm. The enzyme catalyses tRNA(Ile) + L-isoleucine + ATP = L-isoleucyl-tRNA(Ile) + AMP + diphosphate. Catalyzes the attachment of isoleucine to tRNA(Ile). As IleRS can inadvertently accommodate and process structurally similar amino acids such as valine, to avoid such errors it has two additional distinct tRNA(Ile)-dependent editing activities. One activity is designated as 'pretransfer' editing and involves the hydrolysis of activated Val-AMP. The other activity is designated 'posttransfer' editing and involves deacylation of mischarged Val-tRNA(Ile). This chain is Isoleucine--tRNA ligase, found in Methanothermobacter marburgensis (strain ATCC BAA-927 / DSM 2133 / JCM 14651 / NBRC 100331 / OCM 82 / Marburg) (Methanobacterium thermoautotrophicum).